Consider the following 468-residue polypeptide: MTKSLPKDFIFGGATAAYQAEGATHTDGKGPVAWDKYLEDNYWYTAEPASDFYHKYPVDLKLAEEYGVNGIRISIAWSRIFPTGYGEVNPKGVEFYHNLFAECHKRHVEPFVTLHHFDTPEALHSNGDFLNRENIEHFVNYAAFCFEEFPEVRYWTTFNEIGPIGDGQYLVGKFPPGIQYDLAKVFQSHHNMMVSHARAVKLYKDKGYKGEIGVVHALPTKYPYDPENPADVRAAELEDIIHNKFILDATYLGHYSDVTLAGVNHILKVNGGQLDLRDEDFAALEAAKDLNDFLGINYYMSDWMRDFDGETEIIHNGKGEKGSSKYQIKGVGRRESPTHIPKTDWDWIIYPQGLYDQIMRIKKDYPNYKKIYITENGLGYKDEFVDNTVYDDARIDYVKQHLEVLSDAIVDGANVKGYFIWSLMDVFSWSNGYEKRYGLFYVDFETQERYPKKSAHWYKKLAETQMIE.

Positions 19, 116, 159, 160, and 297 each coordinate D-galactose 6-phosphate. Glu-160 functions as the Proton donor in the catalytic mechanism. The active-site Nucleophile is the Glu-375. 4 residues coordinate D-galactose 6-phosphate: Ser-428, Trp-429, Lys-435, and Tyr-437.

It belongs to the glycosyl hydrolase 1 family.

It catalyses the reaction a 6-phospho-beta-D-galactoside + H2O = D-galactose 6-phosphate + an alcohol. The protein operates within carbohydrate metabolism; lactose degradation; D-galactose 6-phosphate and beta-D-glucose from lactose 6-phosphate: step 1/1. This chain is 6-phospho-beta-galactosidase, found in Streptococcus sanguinis (strain SK36).